A 161-amino-acid polypeptide reads, in one-letter code: Small ribosomal subunit protein uS9 (161 aa).

Belongs to the universal ribosomal protein uS9 family.

The protein is Small ribosomal subunit protein uS9 of Methylobacterium radiotolerans (strain ATCC 27329 / DSM 1819 / JCM 2831 / NBRC 15690 / NCIMB 10815 / 0-1).